A 309-amino-acid chain; its full sequence is MRIQTDAVNVVSRASSYLLSGLLKRKPLWFDVVAKYPPKQNLIKVPYIQSKENKDPRNDQFELKKRDRKRPLSALYQTRASKMENGNLNRKIHRIPKLKFLEDEIRDYFHLRHPWENARPKTLVENSGDEVLRKCDWSRMLQLYKPLDGESVVQRTMYILQNDPEVKDVFEAYDIARFEYYKLRMAEEMESHVAKEESVMHGAVFESTHLDWNLTTEQKYIDDWVKIASEKTQVLEANRSKSNAPAGSMGGEEVEAAQVSIFEVFCKLVHQRELKVSKERRSRVQQKTHEETSRALYIIEMKMKRILEK.

Belongs to the mitochondrion-specific ribosomal protein mS23 family. Component of the mitochondrial small ribosomal subunit.

Its subcellular location is the mitochondrion. The protein is Small ribosomal subunit protein mS23 (RSM25) of Lodderomyces elongisporus (strain ATCC 11503 / CBS 2605 / JCM 1781 / NBRC 1676 / NRRL YB-4239) (Yeast).